The chain runs to 201 residues: Recombination protein RecR (201 aa).

The C4-type zinc finger occupies 57–72 (CKYCANFTNKDECDIC). A Toprim domain is found at 80–176 (TKLMIVTTNE…QIYRIGFGIP (97 aa)).

Belongs to the RecR family.

In terms of biological role, may play a role in DNA repair. It seems to be involved in an RecBC-independent recombinational process of DNA repair. It may act with RecF and RecO. The chain is Recombination protein RecR from Ureaplasma parvum serovar 3 (strain ATCC 27815 / 27 / NCTC 11736).